The following is a 162-amino-acid chain: Protein-export protein SecB (162 aa).

The protein belongs to the SecB family. Homotetramer, a dimer of dimers. One homotetramer interacts with 1 SecA dimer.

Its subcellular location is the cytoplasm. In terms of biological role, one of the proteins required for the normal export of preproteins out of the cell cytoplasm. It is a molecular chaperone that binds to a subset of precursor proteins, maintaining them in a translocation-competent state. It also specifically binds to its receptor SecA. This Pseudoalteromonas translucida (strain TAC 125) protein is Protein-export protein SecB.